The chain runs to 104 residues: L-rhamnose mutarotase (104 aa).

Y18 is a substrate binding site. The active-site Proton donor is the H22. Substrate-binding positions include Y41 and 76–77 (WW).

It belongs to the rhamnose mutarotase family. In terms of assembly, homodimer.

It is found in the cytoplasm. It carries out the reaction alpha-L-rhamnose = beta-L-rhamnose. The protein operates within carbohydrate metabolism; L-rhamnose metabolism. Its function is as follows. Involved in the anomeric conversion of L-rhamnose. This is L-rhamnose mutarotase from Oceanobacillus iheyensis (strain DSM 14371 / CIP 107618 / JCM 11309 / KCTC 3954 / HTE831).